The sequence spans 208 residues: Large ribosomal subunit protein uL3 (208 aa).

The residue at position 149 (glutamine 149) is an N5-methylglutamine.

The protein belongs to the universal ribosomal protein uL3 family. As to quaternary structure, part of the 50S ribosomal subunit. Forms a cluster with proteins L14 and L19. In terms of processing, methylated by PrmB.

In terms of biological role, one of the primary rRNA binding proteins, it binds directly near the 3'-end of the 23S rRNA, where it nucleates assembly of the 50S subunit. The chain is Large ribosomal subunit protein uL3 from Haemophilus ducreyi (strain 35000HP / ATCC 700724).